Here is a 385-residue protein sequence, read N- to C-terminus: Type III polyketide synthase C (385 aa).

56-63 (KLQHLCKS) provides a ligand contact to CoA. The active-site Nucleophile is cysteine 165. Residue 217–218 (GD) coordinates substrate. Residues leucine 267, 307–310 (GGPA), and alanine 310 each bind CoA.

This sequence belongs to the thiolase-like superfamily. Chalcone/stilbene synthases family. As to quaternary structure, homodimer.

It localises to the endoplasmic reticulum. The protein operates within secondary metabolite biosynthesis; flavonoid biosynthesis. Its function is as follows. Plant type III polyketide synthases (PKSs) that catalyzes the condensation of malonyl-CoA units with various CoA ester starter molecules to generate a diverse array of natural products including long-chain alkyl alpha-pyrones. In Arabidopsis thaliana (Mouse-ear cress), this protein is Type III polyketide synthase C.